The sequence spans 20 residues: Haemoporin (20 aa).

Positions 1-20 (AAVPEAAAEATAEAAPVSEF) are disordered.

Homopentamer. Forms a cylindrical structure with a central pore. In terms of tissue distribution, detected in the hemolymph.

Its subcellular location is the secreted. In Aplysia californica (California sea hare), this protein is Haemoporin.